The sequence spans 704 residues: Ion-translocating oxidoreductase complex subunit C (704 aa).

4Fe-4S ferredoxin-type domains are found at residues 368-397 (MGAP…QQLY) and 407-436 (KATA…VQYF). [4Fe-4S] cluster is bound by residues cysteine 377, cysteine 380, cysteine 383, cysteine 387, cysteine 416, cysteine 419, cysteine 422, and cysteine 426. Residues 534-682 (QARAKQAAHP…AEPADPRKAA (149 aa)) form a disordered region.

The protein belongs to the 4Fe4S bacterial-type ferredoxin family. RnfC subfamily. In terms of assembly, the complex is composed of six subunits: RsxA, RsxB, RsxC, RsxD, RsxE and RsxG. [4Fe-4S] cluster serves as cofactor.

It localises to the cell inner membrane. Part of a membrane-bound complex that couples electron transfer with translocation of ions across the membrane. Required to maintain the reduced state of SoxR. The sequence is that of Ion-translocating oxidoreductase complex subunit C from Salmonella enteritidis PT4 (strain P125109).